The chain runs to 68 residues: Probable tautomerase HP_0924 (68 aa).

Pro2 (proton acceptor; via imino nitrogen) is an active-site residue.

The protein belongs to the 4-oxalocrotonate tautomerase family.

The chain is Probable tautomerase HP_0924 from Helicobacter pylori (strain ATCC 700392 / 26695) (Campylobacter pylori).